The chain runs to 346 residues: Methylthioribose-1-phosphate isomerase (346 aa).

Residues Arg-46–Ala-48, Arg-89, and Gln-196 each bind substrate. The active-site Proton donor is the Asp-237. Asn-247 to Lys-248 contributes to the substrate binding site.

It belongs to the eIF-2B alpha/beta/delta subunits family. MtnA subfamily.

The enzyme catalyses 5-(methylsulfanyl)-alpha-D-ribose 1-phosphate = 5-(methylsulfanyl)-D-ribulose 1-phosphate. Its pathway is amino-acid biosynthesis; L-methionine biosynthesis via salvage pathway; L-methionine from S-methyl-5-thio-alpha-D-ribose 1-phosphate: step 1/6. Its function is as follows. Catalyzes the interconversion of methylthioribose-1-phosphate (MTR-1-P) into methylthioribulose-1-phosphate (MTRu-1-P). The protein is Methylthioribose-1-phosphate isomerase of Trichlorobacter lovleyi (strain ATCC BAA-1151 / DSM 17278 / SZ) (Geobacter lovleyi).